The chain runs to 623 residues: NADPH-dependent diflavin oxidoreductase 1 (623 aa).

The region spanning 8–153 (LLVLYASQTG…TLDPWMLSLW (146 aa)) is the Flavodoxin-like domain. Residues 14 to 19 (SQTGNA), 62 to 65 (STTG), and D135 each bind FMN. Residues 221–467 (KPDCFLKMTR…SLPAPSQSLP (247 aa)) form the FAD-binding FR-type domain. FAD contacts are provided by residues R369, 399–402 (RAFS), and 433–436 (GLCS). NADP(+) is bound by residues T475, 541–542 (SR), 547–551 (KVYVQ), and D583. W622 is a binding site for FAD.

It belongs to the NADPH-dependent diflavin oxidoreductase NDOR1 family. In the N-terminal section; belongs to the flavodoxin family. The protein in the C-terminal section; belongs to the flavoprotein pyridine nucleotide cytochrome reductase family. In terms of assembly, interacts with At5g18400. Requires FAD as cofactor. The cofactor is FMN. In terms of tissue distribution, widely expressed.

Its subcellular location is the cytoplasm. The protein localises to the nucleus. The catalysed reaction is 2 oxidized [2Fe-2S]-[protein] + NADPH = 2 reduced [2Fe-2S]-[protein] + NADP(+) + H(+). NADPH-dependent reductase which is a central component of the cytosolic iron-sulfur (Fe-S) protein assembly (CIA) machinery. Transfers electrons from NADPH via its FAD and FMN prosthetic groups to the [2Fe-2S] cluster of the anamorsin/DRE2 homolog, another key component of the CIA machinery. In turn, this reduced cluster provides electrons for assembly of cytosolic iron-sulfur cluster proteins. Catalyzes the NADP-dependent reduction of cytochrome c, but not cytochrome P450 in vitro. Required for embryo development. The protein is NADPH-dependent diflavin oxidoreductase 1 (ATR3) of Arabidopsis thaliana (Mouse-ear cress).